We begin with the raw amino-acid sequence, 157 residues long: Probable calcium-binding protein CML23 (157 aa).

4 EF-hand domains span residues 11–46 (GSME…LSPN), 47–82 (ASQE…SDQS), 86–121 (SAIR…LGEK), and 122–157 (CSIQ…NGSA). 19 residues coordinate Ca(2+): Asp-24, Asn-26, Asp-28, Lys-30, Glu-35, Asp-60, Asp-62, Asn-64, Glu-71, Asp-99, Asp-101, Asn-103, Arg-105, Glu-110, Asp-135, Asp-137, Asp-139, Cys-141, and Glu-146.

Functionally, potential calcium sensor. This Arabidopsis thaliana (Mouse-ear cress) protein is Probable calcium-binding protein CML23 (CML23).